Here is a 144-residue protein sequence, read N- to C-terminus: Large ribosomal subunit protein uL15 (144 aa).

Residues 1–52 (MRLNSLSPAEGAKHSAKRLGRGIGSGLGKTGGRGHKGQKSRTGGGVRRGFEG) are disordered. Residues 21–31 (RGIGSGLGKTG) show a composition bias toward gly residues.

Belongs to the universal ribosomal protein uL15 family. Part of the 50S ribosomal subunit.

In terms of biological role, binds to the 23S rRNA. The protein is Large ribosomal subunit protein uL15 of Actinobacillus pleuropneumoniae serotype 5b (strain L20).